The sequence spans 210 residues: 23.6 kDa heat shock protein, mitochondrial (210 aa).

The N-terminal 31 residues, 1–31 (MASALALKRLLSSSIAPRSRSVLRPAVSSRL), are a transit peptide targeting the mitochondrion. The sHSP domain occupies 100–210 (MGASGARRGW…RNDVRQIEIN (111 aa)). Residues 145 to 165 (GEGKNEEDGGEEGESGNRRFT) are disordered.

Belongs to the small heat shock protein (HSP20) family. As to quaternary structure, may form oligomeric structures.

The protein resides in the mitochondrion. The chain is 23.6 kDa heat shock protein, mitochondrial (HSP23.6) from Arabidopsis thaliana (Mouse-ear cress).